A 633-amino-acid chain; its full sequence is Chaperone protein HtpG (633 aa).

Residues 1–345 (MSADTQSETL…SDDLPLNISR (345 aa)) are a; substrate-binding. Residues 346 to 562 (EMLQHNPMIS…EYDFGMGMQR (217 aa)) form a b region. The interval 563–633 (LLQAAGHQLP…VRRVNNLLAG (71 aa)) is c.

Belongs to the heat shock protein 90 family. In terms of assembly, homodimer.

The protein localises to the cytoplasm. Molecular chaperone. Has ATPase activity. This Halorhodospira halophila (strain DSM 244 / SL1) (Ectothiorhodospira halophila (strain DSM 244 / SL1)) protein is Chaperone protein HtpG.